The following is a 183-amino-acid chain: Putative 3-methyladenine DNA glycosylase (183 aa).

This sequence belongs to the DNA glycosylase MPG family.

This Rickettsia rickettsii (strain Iowa) protein is Putative 3-methyladenine DNA glycosylase.